We begin with the raw amino-acid sequence, 26 residues long: Probable early E4 17 kDa protein (26 aa).

This is Probable early E4 17 kDa protein from Homo sapiens (Human).